The primary structure comprises 196 residues: MLKIEGLVLASSSKYRLALLEQIGVVPGEVVSPNIDESLLKGELPRRYCMRMARTKADAEAALRSDKFVLGADTVAYCGKRVLSKTESEDCAVRYLEMLSGRRHRVCTSVCLRSPGGIVHERSVVSVVKFKSMSKGEIEYYISSGQWRGKAGGYGIQGFAGALISWIQGSYSSIAGLPLHETYCLLGGYFDLKHIP.

D73 (proton acceptor) is an active-site residue.

Belongs to the Maf family. A divalent metal cation is required as a cofactor.

Its subcellular location is the cytoplasm. The catalysed reaction is a ribonucleoside 5'-triphosphate + H2O = a ribonucleoside 5'-phosphate + diphosphate + H(+). It carries out the reaction a 2'-deoxyribonucleoside 5'-triphosphate + H2O = a 2'-deoxyribonucleoside 5'-phosphate + diphosphate + H(+). In terms of biological role, nucleoside triphosphate pyrophosphatase. May have a dual role in cell division arrest and in preventing the incorporation of modified nucleotides into cellular nucleic acids. The chain is Nucleoside triphosphate pyrophosphatase from Anaplasma marginale (strain St. Maries).